A 108-amino-acid polypeptide reads, in one-letter code: MSQGVEFNRLMLDMRAMQMDAMSQPKSAAVAEVSGSSFADMLGQAVNKVNDTQQASNQLSSAFEIGKSGVDLTDVMISSQKASVSFQALTQVRNKLVQAYQDIMQMPV.

Belongs to the FliE family.

The protein resides in the bacterial flagellum basal body. This Pseudomonas fluorescens (strain ATCC BAA-477 / NRRL B-23932 / Pf-5) protein is Flagellar hook-basal body complex protein FliE.